Reading from the N-terminus, the 29-residue chain is ATP synthase subunit 9, mitochondrial (29 aa).

The protein belongs to the ATPase C chain family. In terms of assembly, F-type ATPases have 2 components, CF(1) - the catalytic core - and CF(0) - the membrane proton channel. CF(1) has five subunits: alpha(3), beta(3), gamma(1), delta(1), epsilon(1). CF(0) has three main subunits: a, b and c.

The protein resides in the mitochondrion membrane. Its function is as follows. Mitochondrial membrane ATP synthase (F(1)F(0) ATP synthase or Complex V) produces ATP from ADP in the presence of a proton gradient across the membrane which is generated by electron transport complexes of the respiratory chain. F-type ATPases consist of two structural domains, F(1) - containing the extramembraneous catalytic core and F(0) - containing the membrane proton channel, linked together by a central stalk and a peripheral stalk. During catalysis, ATP synthesis in the catalytic domain of F(1) is coupled via a rotary mechanism of the central stalk subunits to proton translocation. Part of the complex F(0) domain. A homomeric c-ring of probably 10 subunits is part of the complex rotary element. In Wickerhamomyces pijperi (Yeast), this protein is ATP synthase subunit 9, mitochondrial (ATP9).